The following is a 71-amino-acid chain: Protein SlyX homolog (71 aa).

The segment at 52 to 71 is disordered; that stretch reads RLDQAESSAGAPANERPPHY.

It belongs to the SlyX family.

The protein is Protein SlyX homolog of Rhodopseudomonas palustris (strain ATCC BAA-98 / CGA009).